Consider the following 42-residue polypeptide: Large ribosomal subunit protein bL36 (42 aa).

Belongs to the bacterial ribosomal protein bL36 family.

The polypeptide is Large ribosomal subunit protein bL36 (Wolbachia pipientis subsp. Culex pipiens (strain wPip)).